The following is a 207-amino-acid chain: Thiamine-phosphate synthase (207 aa).

Residues 37–41 (QYRDK) and Asn69 each bind 4-amino-2-methyl-5-(diphosphooxymethyl)pyrimidine. Asp70 and Asp89 together coordinate Mg(2+). A 4-amino-2-methyl-5-(diphosphooxymethyl)pyrimidine-binding site is contributed by Ser108. 135–137 (SRT) provides a ligand contact to 2-[(2R,5Z)-2-carboxy-4-methylthiazol-5(2H)-ylidene]ethyl phosphate. Lys138 provides a ligand contact to 4-amino-2-methyl-5-(diphosphooxymethyl)pyrimidine. Residue Gly164 participates in 2-[(2R,5Z)-2-carboxy-4-methylthiazol-5(2H)-ylidene]ethyl phosphate binding.

This sequence belongs to the thiamine-phosphate synthase family. It depends on Mg(2+) as a cofactor.

It catalyses the reaction 2-[(2R,5Z)-2-carboxy-4-methylthiazol-5(2H)-ylidene]ethyl phosphate + 4-amino-2-methyl-5-(diphosphooxymethyl)pyrimidine + 2 H(+) = thiamine phosphate + CO2 + diphosphate. The catalysed reaction is 2-(2-carboxy-4-methylthiazol-5-yl)ethyl phosphate + 4-amino-2-methyl-5-(diphosphooxymethyl)pyrimidine + 2 H(+) = thiamine phosphate + CO2 + diphosphate. The enzyme catalyses 4-methyl-5-(2-phosphooxyethyl)-thiazole + 4-amino-2-methyl-5-(diphosphooxymethyl)pyrimidine + H(+) = thiamine phosphate + diphosphate. Its pathway is cofactor biosynthesis; thiamine diphosphate biosynthesis; thiamine phosphate from 4-amino-2-methyl-5-diphosphomethylpyrimidine and 4-methyl-5-(2-phosphoethyl)-thiazole: step 1/1. In terms of biological role, condenses 4-methyl-5-(beta-hydroxyethyl)thiazole monophosphate (THZ-P) and 2-methyl-4-amino-5-hydroxymethyl pyrimidine pyrophosphate (HMP-PP) to form thiamine monophosphate (TMP). The polypeptide is Thiamine-phosphate synthase (Chromobacterium violaceum (strain ATCC 12472 / DSM 30191 / JCM 1249 / CCUG 213 / NBRC 12614 / NCIMB 9131 / NCTC 9757 / MK)).